Reading from the N-terminus, the 461-residue chain is Threonine/serine transporter ThrP (461 aa).

Helical transmembrane passes span 17-37, 40-60, 97-117, 123-143, 156-176, 201-221, 244-264, 278-298, 333-353, 360-380, 401-421, and 430-450; these read IELIALGGTIGVGLFMGAAST, WAGPSVLLAYIIAGLFVFFIM, WFMWMAVGISEITAIGVYVQF, AQWIPALIAVGLVALANLAAV, IKVTTIIVMIIIGLGVIFFGF, GFLTALCIVVASYQGVELIGI, ILIFYVGAIFVIVTIFPWNEI, IGITAAAGIINFVVLTAALSG, VAGVALSILILLVGSCLNYII, FVYVYSASVLPGMVPWFVILI, IMFPWANYLTMAFLVCVLIGM, and SLFVGVIFLLAVTLVYKVFGL.

It belongs to the amino acid-polyamine-organocation (APC) superfamily.

Its subcellular location is the cell inner membrane. It catalyses the reaction L-threonine(in) + H(+)(in) = L-threonine(out) + H(+)(out). It carries out the reaction L-serine(in) + H(+)(in) = L-serine(out) + H(+)(out). Permease that mediates the proton-dependent threonine and serine uptake. The protein is Threonine/serine transporter ThrP of Salmonella typhi.